A 95-amino-acid polypeptide reads, in one-letter code: MRVTATFDKVADIIAETSEIDRETIKPESHTIDDLGIDSLDFLDIVFAIDKEFGIKIPLEQWTQEVNEGKVSTEEYFVLKNLCAKIDELRAAKAG.

One can recognise a Carrier domain in the interval 4–90 (TATFDKVADI…NLCAKIDELR (87 aa)). S39 carries the O-(pantetheine 4'-phosphoryl)serine modification.

Post-translationally, 4'-phosphopantetheine is transferred from CoA to a specific serine of apo-ACP by AcpS. This modification is essential for activity because fatty acids are bound in thioester linkage to the sulfhydryl of the prosthetic group.

It localises to the cytoplasm. It participates in glycolipid biosynthesis; KDO(2)-lipid A biosynthesis. Functionally, carrier of the growing fatty acid chain in fatty acid biosynthesis. Is involved in the transfer of long hydroxylated fatty acids to lipid A. The chain is Acyl carrier protein AcpXL (acpXL) from Rhizobium meliloti (strain 1021) (Ensifer meliloti).